The chain runs to 382 residues: Galactokinase (382 aa).

34-37 contacts substrate; the sequence is EHTD. 124-130 lines the ATP pocket; it reads GAGLSSS. The Mg(2+) site is built by serine 130 and glutamate 162. The active-site Proton acceptor is the aspartate 174. Position 223 (tyrosine 223) interacts with substrate.

This sequence belongs to the GHMP kinase family. GalK subfamily.

The protein localises to the cytoplasm. It carries out the reaction alpha-D-galactose + ATP = alpha-D-galactose 1-phosphate + ADP + H(+). Its pathway is carbohydrate metabolism; galactose metabolism. Its function is as follows. Catalyzes the transfer of the gamma-phosphate of ATP to D-galactose to form alpha-D-galactose-1-phosphate (Gal-1-P). The protein is Galactokinase of Escherichia coli O7:K1 (strain IAI39 / ExPEC).